A 236-amino-acid polypeptide reads, in one-letter code: Leucyl/phenylalanyl-tRNA--protein transferase (236 aa).

Belongs to the L/F-transferase family.

The protein localises to the cytoplasm. The catalysed reaction is N-terminal L-lysyl-[protein] + L-leucyl-tRNA(Leu) = N-terminal L-leucyl-L-lysyl-[protein] + tRNA(Leu) + H(+). It catalyses the reaction N-terminal L-arginyl-[protein] + L-leucyl-tRNA(Leu) = N-terminal L-leucyl-L-arginyl-[protein] + tRNA(Leu) + H(+). It carries out the reaction L-phenylalanyl-tRNA(Phe) + an N-terminal L-alpha-aminoacyl-[protein] = an N-terminal L-phenylalanyl-L-alpha-aminoacyl-[protein] + tRNA(Phe). In terms of biological role, functions in the N-end rule pathway of protein degradation where it conjugates Leu, Phe and, less efficiently, Met from aminoacyl-tRNAs to the N-termini of proteins containing an N-terminal arginine or lysine. This Shewanella woodyi (strain ATCC 51908 / MS32) protein is Leucyl/phenylalanyl-tRNA--protein transferase.